Reading from the N-terminus, the 75-residue chain is Small ribosomal subunit protein bS18 (75 aa).

This sequence belongs to the bacterial ribosomal protein bS18 family. As to quaternary structure, part of the 30S ribosomal subunit. Forms a tight heterodimer with protein bS6.

In terms of biological role, binds as a heterodimer with protein bS6 to the central domain of the 16S rRNA, where it helps stabilize the platform of the 30S subunit. In Alteromonas mediterranea (strain DSM 17117 / CIP 110805 / LMG 28347 / Deep ecotype), this protein is Small ribosomal subunit protein bS18.